Reading from the N-terminus, the 225-residue chain is PKHD-type hydroxylase YbiX (225 aa).

Residues 78 to 177 form the Fe2OG dioxygenase domain; it reads TLSTPLFNRY…RVASFMWIQS (100 aa). Fe cation contacts are provided by His-96, Asp-98, and His-158. Arg-168 lines the 2-oxoglutarate pocket.

The cofactor is Fe(2+). L-ascorbate serves as cofactor.

In Escherichia coli (strain SMS-3-5 / SECEC), this protein is PKHD-type hydroxylase YbiX.